The following is a 161-amino-acid chain: 2-C-methyl-D-erythritol 2,4-cyclodiphosphate synthase (161 aa).

Residues D9 and H11 each coordinate a divalent metal cation. 4-CDP-2-C-methyl-D-erythritol 2-phosphate-binding positions include 9-11 (DFH) and 37-38 (HS). Residue H45 coordinates a divalent metal cation. Residues 59 to 61 (DIG), 64 to 68 (FPDTD), 135 to 138 (TTTE), and R145 each bind 4-CDP-2-C-methyl-D-erythritol 2-phosphate.

The protein belongs to the IspF family. In terms of assembly, homotrimer. The cofactor is a divalent metal cation.

It catalyses the reaction 4-CDP-2-C-methyl-D-erythritol 2-phosphate = 2-C-methyl-D-erythritol 2,4-cyclic diphosphate + CMP. Its pathway is isoprenoid biosynthesis; isopentenyl diphosphate biosynthesis via DXP pathway; isopentenyl diphosphate from 1-deoxy-D-xylulose 5-phosphate: step 4/6. In terms of biological role, involved in the biosynthesis of isopentenyl diphosphate (IPP) and dimethylallyl diphosphate (DMAPP), two major building blocks of isoprenoid compounds. Catalyzes the conversion of 4-diphosphocytidyl-2-C-methyl-D-erythritol 2-phosphate (CDP-ME2P) to 2-C-methyl-D-erythritol 2,4-cyclodiphosphate (ME-CPP) with a corresponding release of cytidine 5-monophosphate (CMP). This Leptospira interrogans serogroup Icterohaemorrhagiae serovar copenhageni (strain Fiocruz L1-130) protein is 2-C-methyl-D-erythritol 2,4-cyclodiphosphate synthase.